Consider the following 448-residue polypeptide: Beclin-1 (448 aa).

An N-acetylmethionine modification is found at Met-1. Ser-14 and Ser-29 each carry phosphoserine. Residues 47–66 (TTAQAKPGETQEEEANSGEE) are disordered. Ser-88, Ser-91, and Ser-94 each carry phosphoserine; by AMPK. Residues 106 to 125 (TMENLSRRLKVTGDLFDIMS) carry the BH3 motif. The interaction with BCL2 and BCL2L1 isoform Bcl-X(L) stretch occupies residues 110–157 (LSRRLKVTGDLFDIMSGQTDVDHPLCEECTDTLLDQLDTQLNVTENEC). Residue Thr-117 is modified to Phosphothreonine; by DAPK1. Residues 140 to 268 (DTLLDQLDTQ…LDKLKKTNVF (129 aa)) are a coiled coil. The interval 243–448 (DELKSVENQV…AWVSSQFYNK (206 aa)) is evolutionary conserved domain (ECD). Residues Lys-400 and Lys-435 each participate in a glycyl lysine isopeptide (Lys-Gly) (interchain with G-Cter in ubiquitin) cross-link. Residues 423-448 (WTKALKFMLTNLKWGLAWVSSQFYNK) form a required for membrane-association region.

This sequence belongs to the beclin family. As to quaternary structure, a homodimeric form is proposed to exist; this metastable form readily transits to ATG14- or UVRAG-containing complexes with BECN1:UVRAG being more stable than BECN1:ATG14. Component of the PI3K (PI3KC3/PI3K-III/class III phosphatidylinositol 3-kinase) complex whose core is composed of the catalytic subunit PIK3C3, the regulatory subunit PIK3R4 and BECN1, and associates with additional regulatory/auxiliary subunits to form alternative complex forms. Accepted alternative complex forms containing a fourth regulatory subunit in a mutually exclusive manner are PI3K complex I (PI3KC3-C1) containing ATG14, and PI3K complex II (PI3KC3-C2) containing UVRAG. PI3KC3-C1 displays a V-shaped architecture with PIK3R4 serving as a bridge between PIK3C3 and the ATG14:BECN1 subcomplex. Both, PI3KC3-C1 and PI3KC3-C2, can associate with further regulatory subunits, such as RUBCN, SH3GLB1/Bif-1 and AMBRA1. PI3KC3-C1 probably associates with PIK3CB. Forms a complex with PPP2CA and AMBRA1; AMBRA1 and BECN1 components of the complex regulate MYC stability via different pathways. Component of the complex, at least composed of LRPPRC, BECN1 and BCL2; the interactions prevent BECN1 from forming an autophagy-inducing complex with PIK3C3. Interacts with AMBRA1, GOPC, GRID2 and PIK3CB. Interacts with BCL2 and BCL2L1 isoform Bcl-X(L); the interaction inhibits BECN1 function in promoting autophagy by interfering with the formation of the PI3K complex. Interacts with cytosolic HMGB1; inhibits the interaction of BECN1 and BCL2 leading to promotion of autophagy. Interacts with USP10, USP13, VMP1, DAPK1. Interacts with the poly-Gln domain of ATXN3; the interaction causes deubiquitination at Lys-400 and stabilizes BECN1. Interacts with SLAMF1. Interacts with TRIM5; the interaction causes activation of BECN1 by causing its dissociation from its inhibitors BCL2 and TAB2. Interacts with active ULK1 (phosphorylated on 'Ser-317') and MEFV simultaneously. Interacts with TRIM50. Interacts with TRIM16. Interacts with WDR81 and WDR91; negatively regulates the PI3 kinase/PI3K activity associated with endosomal membranes. Interacts with LAPTM4B; competes with EGFR for LAPTM4B binding; regulates EGFR activity. Interacts with ATG14; this interaction is increased in the absence of TMEM39A. Interacts with WASHC1; preventing interaction with AMBRA1 and the DCX(AMBRA1) complex and subsequent ubiquitination. Interacts with TRIM17. Interacts with BCL2L10/BCL-B (via BH1 domain). Interacts with SH3BGRL. Interacts with Irgm1; enhancing BECN1-interacting partners and influencing the composition of the BECN1 complex. Interacts with ARMC3. Interacts with LRPPRC. In terms of assembly, (Microbial infection) Interacts with murine gammaherpesvirus 68 M11; the viral protein binds BECN1 with higher affinity than cellular BCL2. In terms of processing, phosphorylation at Thr-117 by DAPK1 reduces its interaction with BCL2 and BCL2L1 and promotes induction of autophagy. In response to autophagic stimuli, phosphorylated at serine residues by AMPK in an ATG14-dependent manner, and this phosphorylation is critical for maximally efficient autophagy. Polyubiquitinated by NEDD4, both with 'Lys-11'- and 'Lys-63'-linkages. 'Lys-11'-linked polyubiquitination leads to degradation and is enhanced when the stabilizing interaction partner VPS34 is depleted. Deubiquitinated by USP10 and USP13, leading to stabilize the PIK3C3/VPS34-containing complexes. Polyubiquitinated at Lys-400 with 'Lys-48'-linkages. 'Lys-48'-linked poyubiquitination of Lys-400 leads to degradation. Deubiquitinated by ATXN3, leading to stabilization. Ubiquitinated at Lys-435 via 'Lys-63'-linkage by the DCX(AMBRA1) complex, thereby increasing the association between BECN1 and PIK3C3 to promote PIK3C3 activity. 'Lys-48'-linked ubiquitination by RNF216 leads to proteasomal degradation and autophagy inhibition. Post-translationally, proteolytically processed by caspases including CASP8 and CASP3; the C-terminal fragments lack autophagy-inducing capacity and are proposed to induce apoptosis. Thus the cleavage is proposed to be an determinant to switch from autophagy to apoptosis pathways affecting cellular homeostasis including viral infections and survival of tumor cells.

The protein localises to the cytoplasm. Its subcellular location is the golgi apparatus. It is found in the trans-Golgi network membrane. It localises to the endosome membrane. The protein resides in the endoplasmic reticulum membrane. The protein localises to the mitochondrion membrane. Its subcellular location is the endosome. It is found in the cytoplasmic vesicle. It localises to the autophagosome. The protein resides in the mitochondrion. The protein localises to the nucleus. In terms of biological role, plays a central role in autophagy. Acts as a core subunit of different PI3K complex forms that mediate formation of phosphatidylinositol 3-phosphate and are believed to play a role in multiple membrane trafficking pathways: PI3KC3-C1 is involved in initiation of autophagosomes and PI3KC3-C2 in maturation of autophagosomes and endocytosis. Involved in regulation of degradative endocytic trafficking and required for the abscission step in cytokinesis, probably in the context of PI3KC3-C2. Essential for the formation of PI3KC3-C2 but not PI3KC3-C1 PI3K complex forms. Involved in endocytosis including endosome formation in neuronal cells. May play a role in antiviral host defense. Beclin-1-C 35 kDa localized to mitochondria can promote apoptosis; it induces the mitochondrial translocation of BAX and the release of proapoptotic factors. The sequence is that of Beclin-1 (Becn1) from Mus musculus (Mouse).